The primary structure comprises 707 residues: Prolyl endopeptidase-like (707 aa).

Active-site charge relay system residues include serine 538, aspartate 624, and histidine 670.

The protein belongs to the peptidase S9A family. As to quaternary structure, homodimer.

Its subcellular location is the cytoplasm. The protein resides in the cytosol. Functionally, serine peptidase whose precise substrate specificity remains unclear. Does not cleave peptides after a arginine or lysine residue. Regulates trans-Golgi network morphology and sorting by regulating the membrane binding of the AP-1 complex. May play a role in the regulation of synaptic vesicle exocytosis. This Xenopus laevis (African clawed frog) protein is Prolyl endopeptidase-like (prepl).